Consider the following 609-residue polypeptide: UvrABC system protein C (609 aa).

One can recognise a GIY-YIG domain in the interval 19–97 (ASPGCYLWKS…IKKHNPRFNV (79 aa)). Positions 208 to 243 (ESLVSDLNIKMSNASERLDFEKAARYRDMLQRIQNF) constitute a UVR domain.

It belongs to the UvrC family. Interacts with UvrB in an incision complex.

The protein resides in the cytoplasm. Functionally, the UvrABC repair system catalyzes the recognition and processing of DNA lesions. UvrC both incises the 5' and 3' sides of the lesion. The N-terminal half is responsible for the 3' incision and the C-terminal half is responsible for the 5' incision. This chain is UvrABC system protein C, found in Leptospira interrogans serogroup Icterohaemorrhagiae serovar copenhageni (strain Fiocruz L1-130).